A 297-amino-acid chain; its full sequence is Translocase of chloroplast 33, chloroplastic (297 aa).

One can recognise an AIG1-type G domain in the interval 34–258; it reads MNSMTVLVLG…HVDKKMVDGS (225 aa). The chain crosses the membrane as a helical span at residues 37–53; sequence MTVLVLGKGGVGKSSTV. GTP-binding positions include 46–51 and 65–70; these read GVGKSS and SPFQAE. Residues Ser50 and Gln68 each contribute to the Mg(2+) site. Homodimerization regions lie at residues 65–68 and 125–130; these read SPFQ and RLDVYR. His160 is a binding site for GTP. Residue Ser181 is modified to Phosphoserine. 208-209 serves as a coordination point for GTP; the sequence is EN.

The protein belongs to the TRAFAC class TrmE-Era-EngA-EngB-Septin-like GTPase superfamily. AIG1/Toc34/Toc159-like paraseptin GTPase family. TOC34 subfamily. In terms of assembly, homodimer, heterodimer with TOC34 and TOC159, and monomer. The homodimerization and the dimerization with TOC159 require the binding of GTP on Arg-130, and a hypothetical coGAP factor. The dimeric form has a higher GTPase activity than the monomeric form. Part of the TOC core complex that includes 1 protein for the specific recognition of transit peptides surrounded by a ring composed of four proteins forming translocation channels, and four to five GTP-binding proteins providing energy. This core complex can interact with components of the TIC complex to form a larger import complex. Chloroplastic protein precursor such as prSS (precursor of the RuBisCO small subunit) interacts with these complexes. The TOC complex contains a specific subset of polar lipids such as digalactosyldiacylglyceride (DGDG), phosphatidylcholine (PC) and phosphatidylglycerol (PG). Interacts at least with TOC75-3. Forms large complexes including TOC33, pPORA and OEP161 during pPORA import into plastids at the plastid envelope membrane. Interacts with SP1. Requires Mg(2+) as cofactor. In terms of processing, phosphorylated by a kinase present in the outer envelope of chloroplast. When Ser-181 is phosphorylated, the binding to preprotein, GTP and GDP is inhibited, and thus, GTPase activity is repressed. In terms of tissue distribution, mostly expressed in seedlings and flowers, and, to a lower extent, in roots, stems, and leaves.

The protein localises to the plastid. Its subcellular location is the chloroplast outer membrane. Functionally, GTPase involved in protein precursor import into chloroplasts. Seems to recognize chloroplast-destined precursor proteins and regulate their presentation to the translocation channel through GTP hydrolysis. Binds GTP, GDP, XTP, but not ATP. Probably specialized in the import of nuclear encoded photosynthetic preproteins from the cytoplasm to the chloroplast, especially during early development stages. The sequence is that of Translocase of chloroplast 33, chloroplastic (TOC33) from Arabidopsis thaliana (Mouse-ear cress).